The following is a 451-amino-acid chain: 3-phosphoshikimate 1-carboxyvinyltransferase (451 aa).

3-phosphoshikimate contacts are provided by lysine 38, serine 39, and arginine 43. Lysine 38 serves as a coordination point for phosphoenolpyruvate. Residues glycine 111 and arginine 140 each coordinate phosphoenolpyruvate. Serine 185, glutamine 187, aspartate 335, and lysine 362 together coordinate 3-phosphoshikimate. Glutamine 187 lines the phosphoenolpyruvate pocket. Aspartate 335 acts as the Proton acceptor in catalysis. Positions 366 and 408 each coordinate phosphoenolpyruvate.

The protein belongs to the EPSP synthase family. Monomer.

The protein localises to the cytoplasm. The enzyme catalyses 3-phosphoshikimate + phosphoenolpyruvate = 5-O-(1-carboxyvinyl)-3-phosphoshikimate + phosphate. It participates in metabolic intermediate biosynthesis; chorismate biosynthesis; chorismate from D-erythrose 4-phosphate and phosphoenolpyruvate: step 6/7. Its function is as follows. Catalyzes the transfer of the enolpyruvyl moiety of phosphoenolpyruvate (PEP) to the 5-hydroxyl of shikimate-3-phosphate (S3P) to produce enolpyruvyl shikimate-3-phosphate and inorganic phosphate. This chain is 3-phosphoshikimate 1-carboxyvinyltransferase, found in Crocosphaera subtropica (strain ATCC 51142 / BH68) (Cyanothece sp. (strain ATCC 51142)).